The sequence spans 486 residues: Ribosomal RNA small subunit methyltransferase F (486 aa).

Residues 124-130 (ASAPGSK), E148, D175, and D193 contribute to the S-adenosyl-L-methionine site. C246 (nucleophile) is an active-site residue.

It belongs to the class I-like SAM-binding methyltransferase superfamily. RsmB/NOP family.

It localises to the cytoplasm. The enzyme catalyses cytidine(1407) in 16S rRNA + S-adenosyl-L-methionine = 5-methylcytidine(1407) in 16S rRNA + S-adenosyl-L-homocysteine + H(+). Its function is as follows. Specifically methylates the cytosine at position 1407 (m5C1407) of 16S rRNA. This Shewanella putrefaciens (strain CN-32 / ATCC BAA-453) protein is Ribosomal RNA small subunit methyltransferase F.